A 288-amino-acid chain; its full sequence is Quinate/shikimate dehydrogenase (288 aa).

Lys-71 and Asp-107 together coordinate substrate. NAD(+) contacts are provided by residues 132–135, 155–158, Lys-205, 232–235, and Gly-255; these read AGGA, NRRD, and CVYN.

This sequence belongs to the shikimate dehydrogenase family. As to quaternary structure, homodimer.

It catalyses the reaction L-quinate + NAD(+) = 3-dehydroquinate + NADH + H(+). The catalysed reaction is L-quinate + NADP(+) = 3-dehydroquinate + NADPH + H(+). The enzyme catalyses shikimate + NADP(+) = 3-dehydroshikimate + NADPH + H(+). It carries out the reaction shikimate + NAD(+) = 3-dehydroshikimate + NADH + H(+). Its pathway is metabolic intermediate biosynthesis; chorismate biosynthesis; chorismate from D-erythrose 4-phosphate and phosphoenolpyruvate: step 4/7. The actual biological function of YdiB remains unclear, nor is it known whether 3-dehydroshikimate or quinate represents the natural substrate. Catalyzes the reversible NAD-dependent reduction of both 3-dehydroshikimate (DHSA) and 3-dehydroquinate to yield shikimate (SA) and quinate, respectively. It can use both NAD or NADP for catalysis, however it has higher catalytic efficiency with NAD. The polypeptide is Quinate/shikimate dehydrogenase (Escherichia coli O7:K1 (strain IAI39 / ExPEC)).